We begin with the raw amino-acid sequence, 322 residues long: tRNA-modifying protein YgfZ (322 aa).

A folate-binding site is contributed by W182.

It belongs to the tRNA-modifying YgfZ family.

Its subcellular location is the cytoplasm. Functionally, folate-binding protein involved in regulating the level of ATP-DnaA and in the modification of some tRNAs. It is probably a key factor in regulatory networks that act via tRNA modification, such as initiation of chromosomal replication. The sequence is that of tRNA-modifying protein YgfZ from Vibrio campbellii (strain ATCC BAA-1116).